We begin with the raw amino-acid sequence, 495 residues long: Genome polyprotein (495 aa).

Over 1 to 445 (MRCIGISNRD…LNQVFGTIYG (445 aa)) the chain is Extracellular. Intrachain disulfides connect cysteine 3–cysteine 30, cysteine 60–cysteine 121, cysteine 74–cysteine 105, and cysteine 92–cysteine 116. An N-linked (GlcNAc...) asparagine; by host glycan is attached at asparagine 67. The segment at 98 to 111 (DRGWGNGCGLFGKG) is fusion peptide. N-linked (GlcNAc...) asparagine; by host glycosylation occurs at asparagine 153. Cystine bridges form between cysteine 185/cysteine 285 and cysteine 302/cysteine 333. The helical transmembrane segment at 446-466 (AAFSGVSWTMKILIGVIITCI) threads the bilayer. At 467 to 472 (GMNSRS) the chain is on the cytoplasmic side. The chain crosses the membrane as a helical span at residues 473-493 (TSLSVSLVLVGVVTLYLGGMV). The Extracellular portion of the chain corresponds to 494-495 (HA).

Homodimer; in the endoplasmic reticulum and Golgi. Interacts with protein prM. Interacts with non-structural protein 1. In terms of processing, N-glycosylated. Specific enzymatic cleavages in vivo yield mature proteins. Cleavages in the lumen of endoplasmic reticulum are performed by host signal peptidase, wereas cleavages in the cytoplasmic side are performed by serine protease NS3. Signal cleavage at the 2K-4B site requires a prior NS3 protease-mediated cleavage at the 4A-2K site.

It localises to the virion membrane. Its subcellular location is the host endoplasmic reticulum membrane. In terms of biological role, binds to host cell surface receptor and mediates fusion between viral and cellular membranes. Envelope protein is synthesized in the endoplasmic reticulum in the form of heterodimer with protein prM. They play a role in virion budding in the ER, and the newly formed immature particle is covered with 60 spikes composed of heterodimer between precursor prM and envelope protein E. The virion is transported to the Golgi apparatus where the low pH causes dissociation of PrM-E heterodimers and formation of E homodimers. prM-E cleavage is inefficient, and many virions are only partially matured. These uncleaved prM would play a role in immune evasion. This chain is Genome polyprotein, found in Aedes aegypti (Yellowfever mosquito).